Here is a 175-residue protein sequence, read N- to C-terminus: Co-chaperone protein HscB homolog (175 aa).

Residues 7 to 79 (SHFELFHLPA…LKRATYLLHL (73 aa)) enclose the J domain.

It belongs to the HscB family. Interacts with HscA and stimulates its ATPase activity.

In terms of biological role, co-chaperone involved in the maturation of iron-sulfur cluster-containing proteins. Seems to help targeting proteins to be folded toward HscA. This chain is Co-chaperone protein HscB homolog, found in Burkholderia thailandensis (strain ATCC 700388 / DSM 13276 / CCUG 48851 / CIP 106301 / E264).